The sequence spans 423 residues: Tyrosine--tRNA ligase (423 aa).

Tyr-35 provides a ligand contact to L-tyrosine. Positions 40–49 (PTAPSLHAGH) match the 'HIGH' region motif. Residues Tyr-170 and Gln-174 each contribute to the L-tyrosine site. The short motif at 230–234 (KFGKS) is the 'KMSKS' region element. Lys-233 contributes to the ATP binding site. In terms of domain architecture, S4 RNA-binding spans 355 to 412 (DLITDLLVATGLSASKGAARRTIAEGGVSVNNVKIDSDEWTPQASDFLHGRWLVLRRG).

Belongs to the class-I aminoacyl-tRNA synthetase family. TyrS type 1 subfamily. In terms of assembly, homodimer.

It is found in the cytoplasm. It carries out the reaction tRNA(Tyr) + L-tyrosine + ATP = L-tyrosyl-tRNA(Tyr) + AMP + diphosphate + H(+). Catalyzes the attachment of tyrosine to tRNA(Tyr) in a two-step reaction: tyrosine is first activated by ATP to form Tyr-AMP and then transferred to the acceptor end of tRNA(Tyr). This is Tyrosine--tRNA ligase from Mycobacterium sp. (strain JLS).